A 126-amino-acid polypeptide reads, in one-letter code: Glycine cleavage system H protein (126 aa).

The Lipoyl-binding domain occupies 22–104 (VATIGITEYA…YEKAWMVKVE (83 aa)). Position 63 is an N6-lipoyllysine (Lys63).

The protein belongs to the GcvH family. As to quaternary structure, the glycine cleavage system is composed of four proteins: P, T, L and H. (R)-lipoate is required as a cofactor.

Functionally, the glycine cleavage system catalyzes the degradation of glycine. The H protein shuttles the methylamine group of glycine from the P protein to the T protein. Is also involved in protein lipoylation via its role as an octanoyl/lipoyl carrier protein intermediate. The polypeptide is Glycine cleavage system H protein (Staphylococcus aureus (strain MSSA476)).